Reading from the N-terminus, the 91-residue chain is Non-structural protein 3a (91 aa).

A signal peptide spans 1–19 (MVSFNATAILLLLLANAFS).

The protein is Non-structural protein 3a of Tylonycteris pachypus (Lesser bamboo bat).